We begin with the raw amino-acid sequence, 552 residues long: Phosphoglucomutase (552 aa).

Ser-143 (phosphoserine intermediate) is an active-site residue. Ser-143, Asp-295, Asp-297, and Asp-299 together coordinate Mg(2+).

Belongs to the phosphohexose mutase family. It depends on Mg(2+) as a cofactor.

It carries out the reaction alpha-D-glucose 1-phosphate = alpha-D-glucose 6-phosphate. It functions in the pathway glycolipid metabolism; diglucosyl-diacylglycerol biosynthesis. Functionally, catalyzes the interconversion between glucose-6-phosphate and alpha-glucose-1-phosphate. This is the first step in the biosynthesis of diglucosyl-diacylglycerol (Glc2-DAG), i.e. the predominant glycolipid found in the S.aureus membrane, which is also used as a membrane anchor for lipoteichoic acid (LTA). The protein is Phosphoglucomutase (pgcA) of Staphylococcus aureus (strain Mu50 / ATCC 700699).